The chain runs to 247 residues: ATP synthase subunit a, chloroplastic (247 aa).

Transmembrane regions (helical) follow at residues Q38–V58, V95–L115, I134–T154, L199–L219, and G220–G240.

The protein belongs to the ATPase A chain family. F-type ATPases have 2 components, CF(1) - the catalytic core - and CF(0) - the membrane proton channel. CF(1) has five subunits: alpha(3), beta(3), gamma(1), delta(1), epsilon(1). CF(0) has four main subunits: a, b, b' and c.

The protein localises to the plastid. It is found in the chloroplast thylakoid membrane. Key component of the proton channel; it plays a direct role in the translocation of protons across the membrane. This chain is ATP synthase subunit a, chloroplastic (atpI), found in Spinacia oleracea (Spinach).